Here is a 363-residue protein sequence, read N- to C-terminus: Fructose-bisphosphate aldolase C (363 aa).

Tyr-5 is modified (phosphotyrosine). A phosphoserine mark is found at Ser-36, Ser-39, and Ser-45. Arg-56 is a binding site for substrate. Position 111 is an N6-acetyllysine (Lys-111). Lys-147 contributes to the substrate binding site. The active-site Proton acceptor is the Glu-188. The active-site Schiff-base intermediate with dihydroxyacetone-P is the Lys-230.

This sequence belongs to the class I fructose-bisphosphate aldolase family. Homotetramer. Interacts with ATP6V1E1. Expressed exclusively in Purkinje cells in bands running from anterior to posterior across most of the cerebellum. Expressed at higher levels in the brains of BSE-infected animals.

It carries out the reaction beta-D-fructose 1,6-bisphosphate = D-glyceraldehyde 3-phosphate + dihydroxyacetone phosphate. Its pathway is carbohydrate degradation; glycolysis; D-glyceraldehyde 3-phosphate and glycerone phosphate from D-glucose: step 4/4. This Mus musculus (Mouse) protein is Fructose-bisphosphate aldolase C (Aldoc).